A 310-amino-acid polypeptide reads, in one-letter code: Thioredoxin reductase (310 aa).

Position 34 to 41 (34 to 41 (NGMQPGGQ)) interacts with FAD. Cysteines 135 and 138 form a disulfide. Residue 281–290 (DVQDKIYRQA) participates in FAD binding.

This sequence belongs to the class-II pyridine nucleotide-disulfide oxidoreductase family. As to quaternary structure, homodimer. FAD is required as a cofactor.

It is found in the cytoplasm. The enzyme catalyses [thioredoxin]-dithiol + NADP(+) = [thioredoxin]-disulfide + NADPH + H(+). The sequence is that of Thioredoxin reductase (trxB) from Rickettsia felis (strain ATCC VR-1525 / URRWXCal2) (Rickettsia azadi).